The primary structure comprises 770 residues: Pheromone-regulated membrane protein 10 (770 aa).

Disordered stretches follow at residues 1 to 125 (MDGR…DGDD) and 139 to 169 (NQGG…RNEE). Polar residues-rich tracts occupy residues 49–63 (SGKS…NNDN) and 78–93 (DLSS…SKGT). Positions 155–169 (ENGKDDIEKNNRNEE) are enriched in basic and acidic residues. 10 helical membrane-spanning segments follow: residues 453–473 (WMCV…AFGG), 475–495 (WVNL…QFIL), 505–525 (VFEI…GSIP), 529–549 (ICFG…YIIL), 568–588 (FYAI…SALF), 604–624 (LISP…ISLL), 629–649 (ISQL…TYWA), 659–679 (FTAA…SRIW), 681–701 (GLAV…GIAS), and 740–760 (IQVC…VYPF).

The protein belongs to the ThrE exporter (TC 2.A.79) family.

Its subcellular location is the membrane. The protein is Pheromone-regulated membrane protein 10 (PRM10) of Saccharomyces cerevisiae (strain YJM789) (Baker's yeast).